Reading from the N-terminus, the 155-residue chain is Small ribosomal subunit protein uS7cz/uS7cy (155 aa).

It belongs to the universal ribosomal protein uS7 family. Part of the 30S ribosomal subunit.

It is found in the plastid. The protein localises to the chloroplast. In terms of biological role, one of the primary rRNA binding proteins, it binds directly to 16S rRNA where it nucleates assembly of the head domain of the 30S subunit. The sequence is that of Small ribosomal subunit protein uS7cz/uS7cy (rps7-A) from Guizotia abyssinica (Niger).